Consider the following 58-residue polypeptide: U8-ctenitoxin-Pr1a (58 aa).

Cystine bridges form between Cys2–Cys16, Cys9–Cys22, Cys15–Cys40, Cys24–Cys38, and Cys48–Cys55.

As to expression, expressed by the venom gland.

It is found in the secreted. Functionally, no toxic effects on mice at dose levels of 5 ug per mouse. May be toxic to insects. The sequence is that of U8-ctenitoxin-Pr1a from Phoneutria reidyi (Brazilian Amazonian armed spider).